The chain runs to 181 residues: Large ribosomal subunit protein uL6 (181 aa).

It belongs to the universal ribosomal protein uL6 family. As to quaternary structure, part of the 50S ribosomal subunit.

Its function is as follows. This protein binds to the 23S rRNA, and is important in its secondary structure. It is located near the subunit interface in the base of the L7/L12 stalk, and near the tRNA binding site of the peptidyltransferase center. The sequence is that of Large ribosomal subunit protein uL6 from Synechococcus sp. (strain CC9605).